Here is a 299-residue protein sequence, read N- to C-terminus: Acetaldehyde dehydrogenase 6 (299 aa).

Cys-125 acts as the Acyl-thioester intermediate in catalysis. Residues 156–164 (GAGPGTRAN) and Asn-275 contribute to the NAD(+) site.

It belongs to the acetaldehyde dehydrogenase family.

It catalyses the reaction acetaldehyde + NAD(+) + CoA = acetyl-CoA + NADH + H(+). This chain is Acetaldehyde dehydrogenase 6 (hpdG), found in Rhodococcus jostii (strain RHA1).